Reading from the N-terminus, the 473-residue chain is MELGKTKRVHIVGIGGAGMSAIAELLLKSGFAVSGSDLSTGEVTDKLQQHGAVIYRGHEAGQVADCDVVVYSSAVRPDANVEISEALKSGIPVVKRDEMLGELMRYKSGICVAGTHGKTTTTAMIATMLIESGESPTVMIGGVSDYLKGSTVVGEGRYMVIEADEFDRAFLRLTPTIAVLNSLESEHMDTYGTLDELKRSFIEFANKVPFYGRVICSVDWPEIRRIIGSLNRRLTTVGIEEPADVTAGDIVMDHGRATFTITAFGTDYPGVCLNVPGRHNILNALSAFATGLELGIEPERLIAGLGRYSGMRRRFQVKFRDSRGLMVIDDYAHHPSEVKATVKAARSGWPDARVIAVFQPHLFSRTLEFADEYGWALSRADGVYVAAVYPSREKQEDFPGVDGALVAEAVRRAGGRQVAFVPDRDELLAAVLNEGAEPAPGGTILLFMGAGDITVLATEVAGRVSGGEGHARA.

114 to 120 (GTHGKTT) contributes to the ATP binding site.

Belongs to the MurCDEF family.

The protein resides in the cytoplasm. It catalyses the reaction UDP-N-acetyl-alpha-D-muramate + L-alanine + ATP = UDP-N-acetyl-alpha-D-muramoyl-L-alanine + ADP + phosphate + H(+). The protein operates within cell wall biogenesis; peptidoglycan biosynthesis. Cell wall formation. The polypeptide is UDP-N-acetylmuramate--L-alanine ligase (Chlorobium luteolum (strain DSM 273 / BCRC 81028 / 2530) (Pelodictyon luteolum)).